The sequence spans 78 residues: Acyl carrier protein (78 aa).

The Carrier domain occupies 2 to 77 (STIEERVKKI…AAIDFIQANQ (76 aa)). Ser-37 carries the O-(pantetheine 4'-phosphoryl)serine modification.

Belongs to the acyl carrier protein (ACP) family. 4'-phosphopantetheine is transferred from CoA to a specific serine of apo-ACP by AcpS. This modification is essential for activity because fatty acids are bound in thioester linkage to the sulfhydryl of the prosthetic group.

Its subcellular location is the cytoplasm. It functions in the pathway lipid metabolism; fatty acid biosynthesis. Carrier of the growing fatty acid chain in fatty acid biosynthesis. The chain is Acyl carrier protein from Pectobacterium atrosepticum (strain SCRI 1043 / ATCC BAA-672) (Erwinia carotovora subsp. atroseptica).